Consider the following 201-residue polypeptide: UPF0637 protein LCA_0842 (201 aa).

This sequence belongs to the UPF0637 family.

In Latilactobacillus sakei subsp. sakei (strain 23K) (Lactobacillus sakei subsp. sakei), this protein is UPF0637 protein LCA_0842.